The chain runs to 365 residues: Peptide chain release factor 1 (365 aa).

Gln236 is subject to N5-methylglutamine.

This sequence belongs to the prokaryotic/mitochondrial release factor family. Methylated by PrmC. Methylation increases the termination efficiency of RF1.

Its subcellular location is the cytoplasm. Its function is as follows. Peptide chain release factor 1 directs the termination of translation in response to the peptide chain termination codons UAG and UAA. In Latilactobacillus sakei subsp. sakei (strain 23K) (Lactobacillus sakei subsp. sakei), this protein is Peptide chain release factor 1.